A 304-amino-acid chain; its full sequence is ATP phosphoribosyltransferase (304 aa).

The protein belongs to the ATP phosphoribosyltransferase family. Long subfamily. Mg(2+) is required as a cofactor.

It localises to the cytoplasm. The enzyme catalyses 1-(5-phospho-beta-D-ribosyl)-ATP + diphosphate = 5-phospho-alpha-D-ribose 1-diphosphate + ATP. Its pathway is amino-acid biosynthesis; L-histidine biosynthesis; L-histidine from 5-phospho-alpha-D-ribose 1-diphosphate: step 1/9. Its activity is regulated as follows. Feedback inhibited by histidine. Functionally, catalyzes the condensation of ATP and 5-phosphoribose 1-diphosphate to form N'-(5'-phosphoribosyl)-ATP (PR-ATP). Has a crucial role in the pathway because the rate of histidine biosynthesis seems to be controlled primarily by regulation of HisG enzymatic activity. The protein is ATP phosphoribosyltransferase of Xanthomonas oryzae pv. oryzae (strain MAFF 311018).